The primary structure comprises 330 residues: GTPase Obg (330 aa).

One can recognise an Obg domain in the interval 1–159 (MHFIDEVKIY…MWIHLRLKLL (159 aa)). Positions 160-327 (SDVGLVGLPN…IVKLALEIIK (168 aa)) constitute an OBG-type G domain. Residues 166 to 173 (GLPNAGKS), 191 to 195 (FTTLV), 212 to 215 (DIPG), 279 to 282 (NKCD), and 308 to 310 (STY) contribute to the GTP site. Ser-173 and Thr-193 together coordinate Mg(2+).

The protein belongs to the TRAFAC class OBG-HflX-like GTPase superfamily. OBG GTPase family. Monomer. The cofactor is Mg(2+).

It localises to the cytoplasm. An essential GTPase which binds GTP, GDP and possibly (p)ppGpp with moderate affinity, with high nucleotide exchange rates and a fairly low GTP hydrolysis rate. Plays a role in control of the cell cycle, stress response, ribosome biogenesis and in those bacteria that undergo differentiation, in morphogenesis control. This chain is GTPase Obg, found in Rickettsia typhi (strain ATCC VR-144 / Wilmington).